The chain runs to 157 residues: MNRFIIADATKCIGCRTCEVACAVSHHENQDCAALSPDEFISRIRVIKDHCWTTAVACHQCEDAPCANVCPVDAISREHGHIFVEQTRCIGCKSCMLACPFGAMEVVSSRKKARAIKCDLCWHRETGPACVEACPTKALQCMDVEKVQRHRLRQQPV.

4Fe-4S ferredoxin-type domains follow at residues 2 to 32, 48 to 80, 80 to 109, and 112 to 144; these read NRFIIADATKCIGCRTCEVACAVSHHENQDC, KDHCWTTAVACHQCEDAPCANVCPVDAISREHG, GHIFVEQTRCIGCKSCMLACPFGAMEVVSS, and KARAIKCDLCWHRETGPACVEACPTKALQCMDV. 16 residues coordinate [4Fe-4S] cluster: Cys-12, Cys-15, Cys-18, Cys-22, Cys-58, Cys-61, Cys-66, Cys-70, Cys-89, Cys-92, Cys-95, Cys-99, Cys-118, Cys-121, Cys-130, and Cys-134.

This Escherichia coli (strain K12) protein is Putative electron transport protein YsaA (ysaA).